A 579-amino-acid chain; its full sequence is Type II restriction enzyme FokI (579 aa).

Residues Asp450, Asp467, and Lys469 contribute to the active site.

In terms of assembly, monomer, in which form it can cleave DNA. Homodimer when bound to DNA. It depends on Mg(2+) as a cofactor.

The catalysed reaction is Endonucleolytic cleavage of DNA to give specific double-stranded fragments with terminal 5'-phosphates.. Its function is as follows. An S subtype restriction enzyme that recognizes the asymmetric double-stranded sequence 5'-GGATG-3' and cleaves respectively 14 bases after G-1 (top strand) and 13 bases before C-1 (bottom strand). This chain is Type II restriction enzyme FokI, found in Planomicrobium okeanokoites (Planococcus okeanokoites).